A 143-amino-acid chain; its full sequence is Small ribosomal subunit protein uS11c (143 aa).

This sequence belongs to the universal ribosomal protein uS11 family. Part of the 30S ribosomal subunit.

The protein localises to the plastid. It localises to the chloroplast. The polypeptide is Small ribosomal subunit protein uS11c (Brachypodium distachyon (Purple false brome)).